The chain runs to 254 residues: 21S rRNA pseudouridine(2819) synthase (254 aa).

Aspartate 71 is an active-site residue.

This sequence belongs to the pseudouridine synthase RluA family.

It is found in the mitochondrion. It carries out the reaction uridine(2819) in 21S rRNA = pseudouridine(2819) in 21S rRNA. Its function is as follows. Pseudouridylate synthase responsible for the pseudouridine-2819 formation in mitochondrial 21S rRNA. May modulate the efficiency or the fidelity of the mitochondrial translation machinery. The sequence is that of 21S rRNA pseudouridine(2819) synthase (PUS5) from Saccharomyces cerevisiae (strain ATCC 204508 / S288c) (Baker's yeast).